We begin with the raw amino-acid sequence, 129 residues long: Thylakoid-associated single-stranded DNA-binding protein slr1034 (129 aa).

One can recognise an SSB domain in the interval 1–100; the sequence is MNSFVLMATV…LTASRISLVD (100 aa). The disordered stretch occupies residues 99-129; it reads VDSGNGINPGELSSPPEPEAVDLSNTDDIPF.

In terms of assembly, homotetramer.

The protein resides in the cellular thylakoid membrane. The protein is Thylakoid-associated single-stranded DNA-binding protein slr1034 of Synechocystis sp. (strain ATCC 27184 / PCC 6803 / Kazusa).